Here is a 158-residue protein sequence, read N- to C-terminus: NAD(P)H-quinone oxidoreductase subunit J, chloroplastic (158 aa).

Belongs to the complex I 30 kDa subunit family. NDH is composed of at least 16 different subunits, 5 of which are encoded in the nucleus.

It localises to the plastid. The protein resides in the chloroplast thylakoid membrane. It carries out the reaction a plastoquinone + NADH + (n+1) H(+)(in) = a plastoquinol + NAD(+) + n H(+)(out). The enzyme catalyses a plastoquinone + NADPH + (n+1) H(+)(in) = a plastoquinol + NADP(+) + n H(+)(out). NDH shuttles electrons from NAD(P)H:plastoquinone, via FMN and iron-sulfur (Fe-S) centers, to quinones in the photosynthetic chain and possibly in a chloroplast respiratory chain. The immediate electron acceptor for the enzyme in this species is believed to be plastoquinone. Couples the redox reaction to proton translocation, and thus conserves the redox energy in a proton gradient. This Guizotia abyssinica (Niger) protein is NAD(P)H-quinone oxidoreductase subunit J, chloroplastic.